We begin with the raw amino-acid sequence, 312 residues long: Methionyl-tRNA formyltransferase (312 aa).

(6S)-5,6,7,8-tetrahydrofolate is bound at residue 111 to 114 (SLLP).

It belongs to the Fmt family.

The catalysed reaction is L-methionyl-tRNA(fMet) + (6R)-10-formyltetrahydrofolate = N-formyl-L-methionyl-tRNA(fMet) + (6S)-5,6,7,8-tetrahydrofolate + H(+). Attaches a formyl group to the free amino group of methionyl-tRNA(fMet). The formyl group appears to play a dual role in the initiator identity of N-formylmethionyl-tRNA by promoting its recognition by IF2 and preventing the misappropriation of this tRNA by the elongation apparatus. The protein is Methionyl-tRNA formyltransferase of Myxococcus xanthus (strain DK1622).